The primary structure comprises 170 residues: 4-hydroxyphenylacetate 3-monooxygenase reductase component (170 aa).

Belongs to the non-flavoprotein flavin reductase family. HpaC subfamily. As to quaternary structure, homodimer. 4-HPA 3-monooxygenase consists of a reductase component HpaC and an oxygenase component HpaB.

It catalyses the reaction a reduced flavin + NAD(+) = an oxidized flavin + NADH + 2 H(+). It participates in aromatic compound metabolism; 4-hydroxyphenylacetate degradation; pyruvate and succinate semialdehyde from 4-hydroxyphenylacetate: step 1/7. Its function is as follows. Catalyzes the reduction of free flavins (FMN, FAD and riboflavin) by NADH. Subsequently, the reduced flavins diffuse to the large HpaB component or to other electron acceptors such as cytochrome c and Fe(3+) ion. This chain is 4-hydroxyphenylacetate 3-monooxygenase reductase component (hpaC), found in Escherichia coli.